The following is a 204-amino-acid chain: Leucyl/phenylalanyl-tRNA--protein transferase (204 aa).

It belongs to the L/F-transferase family.

The protein localises to the cytoplasm. The catalysed reaction is N-terminal L-lysyl-[protein] + L-leucyl-tRNA(Leu) = N-terminal L-leucyl-L-lysyl-[protein] + tRNA(Leu) + H(+). It carries out the reaction N-terminal L-arginyl-[protein] + L-leucyl-tRNA(Leu) = N-terminal L-leucyl-L-arginyl-[protein] + tRNA(Leu) + H(+). It catalyses the reaction L-phenylalanyl-tRNA(Phe) + an N-terminal L-alpha-aminoacyl-[protein] = an N-terminal L-phenylalanyl-L-alpha-aminoacyl-[protein] + tRNA(Phe). In terms of biological role, functions in the N-end rule pathway of protein degradation where it conjugates Leu, Phe and, less efficiently, Met from aminoacyl-tRNAs to the N-termini of proteins containing an N-terminal arginine or lysine. In Sinorhizobium medicae (strain WSM419) (Ensifer medicae), this protein is Leucyl/phenylalanyl-tRNA--protein transferase.